The chain runs to 576 residues: Glutamine-dependent NAD(+) synthetase (576 aa).

The CN hydrolase domain occupies 4–246 (LRVTLAQLNP…EEIITVDLDL (243 aa)). E44 acts as the Proton acceptor; for glutaminase activity in catalysis. Residue K112 is the For glutaminase activity of the active site. An L-glutamine-binding site is contributed by Y118. The active-site Nucleophile; for glutaminase activity is the C148. L-glutamine-binding residues include S176 and K182. A ligase region spans residues 292–576 (PVREEEMFRA…PITNRFKEPL (285 aa)). 321 to 328 (GLSGGMDS) is a binding site for ATP. N404 is a binding site for deamido-NAD(+). T428 is a binding site for ATP. Positions 433 and 545 each coordinate deamido-NAD(+).

This sequence in the C-terminal section; belongs to the NAD synthetase family.

The catalysed reaction is deamido-NAD(+) + L-glutamine + ATP + H2O = L-glutamate + AMP + diphosphate + NAD(+) + H(+). The protein operates within cofactor biosynthesis; NAD(+) biosynthesis; NAD(+) from deamido-NAD(+) (L-Gln route): step 1/1. Its function is as follows. Catalyzes the ATP-dependent amidation of deamido-NAD to form NAD. Uses L-glutamine as a nitrogen source. This chain is Glutamine-dependent NAD(+) synthetase (nadE2), found in Thermotoga maritima (strain ATCC 43589 / DSM 3109 / JCM 10099 / NBRC 100826 / MSB8).